The sequence spans 150 residues: uncharacterized protein (150 aa).

Residues 4 to 148 (LILYKSIHHK…KAKEFAKSIL (145 aa)) form the Flavodoxin-like domain.

This is an uncharacterized protein from Methanocaldococcus jannaschii (strain ATCC 43067 / DSM 2661 / JAL-1 / JCM 10045 / NBRC 100440) (Methanococcus jannaschii).